The chain runs to 168 residues: uncharacterized protein (168 aa).

Residues 14–168 enclose the N-acetyltransferase domain; sequence IDIPLLDAAS…EYKHWIYVTK (155 aa).

Belongs to the acetyltransferase family.

This is an uncharacterized protein from Bacillus subtilis (strain 168).